Here is a 149-residue protein sequence, read N- to C-terminus: Immunoglobulin kappa chain variable 6-17 (149 aa).

The N-terminal stretch at Met-1–Gly-29 is a signal peptide. 2 repeats span residues Gly-26 to Gln-35 and Gly-38 to Gln-47. The framework-1 stretch occupies residues Asp-42 to Cys-64. The interval Lys-65–Ala-75 is complementarity-determining-1. Positions Trp-76 to Tyr-90 are framework-2. The tract at residues Ser-91–Thr-97 is complementarity-determining-2. The framework-3 stretch occupies residues Gly-98–Cys-129. The tract at residues Gln-130–Thr-138 is complementarity-determining-3. The tract at residues Phe-139 to Lys-148 is framework-4.

This chain is Immunoglobulin kappa chain variable 6-17, found in Mus musculus (Mouse).